Reading from the N-terminus, the 97-residue chain is Protein E7 (97 aa).

The E7 terminal domain stretch occupies residues 1 to 41 (MHGNYTTLKEIVLQLEPPDPVGLHCNEQLDSSEDEVDELAT). An LXCXE motif; interaction with host RB1 and TMEM173/STING motif is present at residues 23–27 (LHCNE). A zinc finger lies at 57-93 (CGTCSRKVRLVVQCTGTDIHHLHTLLLGSLDILCPVC). A Nuclear export signal motif is present at residues 75-83 (IHHLHTLLL).

It belongs to the papillomaviridae E7 protein family. Homodimer. Homooligomer. Interacts with host RB1; this interaction induces dissociation of RB1-E2F1 complex thereby disrupting RB1 activity. Interacts with host EP300; this interaction represses EP300 transcriptional activity. Interacts with protein E2; this interaction inhibits E7 oncogenic activity. Interacts with host TMEM173/STING; this interaction impairs the ability of TMEM173/STING to sense cytosolic DNA and promote the production of type I interferon (IFN-alpha and IFN-beta). Highly phosphorylated.

It is found in the host cytoplasm. The protein localises to the host nucleus. Functionally, plays a role in viral genome replication by driving entry of quiescent cells into the cell cycle. Stimulation of progression from G1 to S phase allows the virus to efficiently use the cellular DNA replicating machinery to achieve viral genome replication. E7 protein has both transforming and trans-activating activities. Induces the disassembly of the E2F1 transcription factor from RB1, with subsequent transcriptional activation of E2F1-regulated S-phase genes. Interferes with host histone deacetylation mediated by HDAC1 and HDAC2, leading to transcription activation. Also plays a role in the inhibition of both antiviral and antiproliferative functions of host interferon alpha. Interaction with host TMEM173/STING impairs the ability of TMEM173/STING to sense cytosolic DNA and promote the production of type I interferon (IFN-alpha and IFN-beta). This Homo sapiens (Human) protein is Protein E7.